The sequence spans 443 residues: Inactive polypeptide N-acetylgalactosaminyltransferase-like protein 5 (443 aa).

Over 1–4 (MRNA) the chain is Cytoplasmic. The chain crosses the membrane as a helical; Signal-anchor for type II membrane protein span at residues 5-27 (IIRCLFYGSLTFGIWTALLFIYL). The Lumenal portion of the chain corresponds to 28–443 (HHNHVSNWQK…PELEASVNRS (416 aa)). The N-linked (GlcNAc...) asparagine glycan is linked to Asn-87. Cystine bridges form between Cys-124-Cys-355 and Cys-346-Cys-422. The interval 133-243 (LPTASIVICF…RVWLEPLLHA (111 aa)) is catalytic subdomain A. Positions 174 and 204 each coordinate substrate. Asp-227 is a Mn(2+) binding site. Ser-228 contributes to the substrate binding site. His-229 is a Mn(2+) binding site. Positions 301 to 363 (PIRSPAMSGG…PCSRVGHISK (63 aa)) are catalytic subdomain B. Substrate is bound at residue Trp-332. His-360 provides a ligand contact to Mn(2+).

The protein belongs to the glycosyltransferase 2 family. GalNAc-T subfamily. Mn(2+) is required as a cofactor. Expressed in testis.

The protein localises to the late endosome membrane. Probable inactive glycosyltransferase required during spermatid development. May participate in protein loading into the acrosomes and accumulation of ubiquitin-proteasome systems around the head-tail coupling apparatus region. The protein is Inactive polypeptide N-acetylgalactosaminyltransferase-like protein 5 (GALNTL5) of Macaca fascicularis (Crab-eating macaque).